A 518-amino-acid polypeptide reads, in one-letter code: MPNIDLPTLEAFVHAIPQNYKGPGGAVAVVRNGEIVLRHAWGFADLAARKAMTPETRMPICSVSKQFTCAVLLDCIGEPEMLDSALAAYLDQFEDGRPAVRDLCNNQSGLRDYWALTVLCGAAPEGIFLPDQAQNLLRRLKTTHFAPGTHYSYCNGNFRILADLIEQHTGRSLADLLAERIFAPAAMKTAELIPDTALFNECTGYEGDTVRGFLPAINRIHWLGDAGICASLDDMIAWEQFIDRTRHDENGLYRRLSSPQTFADGAPAPYGFGLKFEETGGKRLTGHGGALRGWRCQRWHCADERISTIVMFNFEGNASDAALKMMNAALGIPPAKPVRAQANPGWFGSWLNPETGLVLSLEDAGGGRMKARFGTGPEIMDISGENEAQSSMTTLRRDGDMIHLARKDENLHLAMHRLKGEARQDIAGRYRSDELEADLLLVSEGGAIYGAFEGFLGKSDMYPLYAAGPDVWLLPVQRSMDAPSPGEWKLVFHRDAAGRITGVTVGCWLARGVEYKRL.

Ser62 (nucleophile) is an active-site residue. The active-site Proton donor/acceptor is Lys65. Residues 477 to 487 (QRSMDAPSPGE) form an important for specificity region. Asp481 contributes to the substrate binding site.

This sequence belongs to the peptidase S12 family. Homodimer.

The enzyme catalyses Release of an N-terminal D-amino acid from a peptide, Xaa-|-Yaa-, in which Xaa is preferably D-Ala, D-Ser or D-Thr. D-amino acid amides and methyl esters also are hydrolyzed, as is glycine amide.. With respect to regulation, inhibited by beta-lactam compounds such as 6-aminopenicillic acid, 7-aminocephalosporanic acid, benzylpenicillin and ampicillin. Inhibited by p-chloromercuribenzoate. Functionally, hydrolyzes N-terminal residues in D-amino acid-containing peptides. The polypeptide is D-aminopeptidase (Brucella abortus (strain S19)).